The sequence spans 467 residues: MDTAGIRLTPKEIVSKLNEYIVGQNDAKRKVAIALRNRYRRSLLDEESKQEISPKNILMIGPTGVGKTEIARRMAKVVGAPFIKVEATKFTEVGYVGRDVESMVRDLVDVSVRLVKAQKKSLVQDEATAKANEKLVKLLVPSMKKKASQTNNPLESLFGGAIPNFGQNNEDEEEPPTEEIKTKRSEIKRQLEEGKLEKEKVRIKVEQDPGALGMLGTNQNQQMQEMMNQLMPKKKVEREVAVETARKILADSYADELIDQESANQEALELAEQMGIIFIDEIDKVATNNHNSGQDVSRQGVQRDILPILEGSVIQTKYGTVNTEHMLFIGAGAFHVSKPSDLIPELQGRFPIRVELDSLSVEDFVRILTEPKLSLIKQYEALLQTEEVTVNFTDEAITRLAEIAYQVNQDTDNIGARRLHTILEKMLEDLSFEAPSMPNAVVDITPQYVDDKLKSISTNKDLSAFIL.

ATP-binding positions include Val22 and 64 to 69 (GVGKTE). Residues 149-192 (QTNNPLESLFGGAIPNFGQNNEDEEEPPTEEIKTKRSEIKRQLE) form a disordered region. A compositionally biased stretch (basic and acidic residues) spans 178 to 192 (EEIKTKRSEIKRQLE). The ATP site is built by Asp280, Glu345, and Arg417.

The protein belongs to the ClpX chaperone family. HslU subfamily. As to quaternary structure, a double ring-shaped homohexamer of HslV is capped on each side by a ring-shaped HslU homohexamer. The assembly of the HslU/HslV complex is dependent on binding of ATP.

It localises to the cytoplasm. Functionally, ATPase subunit of a proteasome-like degradation complex; this subunit has chaperone activity. The binding of ATP and its subsequent hydrolysis by HslU are essential for unfolding of protein substrates subsequently hydrolyzed by HslV. HslU recognizes the N-terminal part of its protein substrates and unfolds these before they are guided to HslV for hydrolysis. In Staphylococcus aureus (strain MW2), this protein is ATP-dependent protease ATPase subunit HslU.